The following is a 250-amino-acid chain: Ubiquinone/menaquinone biosynthesis C-methyltransferase UbiE (250 aa).

Residues T73, D94, 122-123, and S139 each bind S-adenosyl-L-methionine; that span reads NA.

It belongs to the class I-like SAM-binding methyltransferase superfamily. MenG/UbiE family.

It carries out the reaction a 2-demethylmenaquinol + S-adenosyl-L-methionine = a menaquinol + S-adenosyl-L-homocysteine + H(+). It catalyses the reaction a 2-methoxy-6-(all-trans-polyprenyl)benzene-1,4-diol + S-adenosyl-L-methionine = a 5-methoxy-2-methyl-3-(all-trans-polyprenyl)benzene-1,4-diol + S-adenosyl-L-homocysteine + H(+). It participates in quinol/quinone metabolism; menaquinone biosynthesis; menaquinol from 1,4-dihydroxy-2-naphthoate: step 2/2. The protein operates within cofactor biosynthesis; ubiquinone biosynthesis. Methyltransferase required for the conversion of demethylmenaquinol (DMKH2) to menaquinol (MKH2) and the conversion of 2-polyprenyl-6-methoxy-1,4-benzoquinol (DDMQH2) to 2-polyprenyl-3-methyl-6-methoxy-1,4-benzoquinol (DMQH2). In Francisella tularensis subsp. mediasiatica (strain FSC147), this protein is Ubiquinone/menaquinone biosynthesis C-methyltransferase UbiE.